We begin with the raw amino-acid sequence, 562 residues long: Arginine--tRNA ligase 1 (562 aa).

The 'HIGH' region signature appears at 122–132 (PNIAKPFSMGH).

Belongs to the class-I aminoacyl-tRNA synthetase family. In terms of assembly, monomer.

It localises to the cytoplasm. The catalysed reaction is tRNA(Arg) + L-arginine + ATP = L-arginyl-tRNA(Arg) + AMP + diphosphate. The protein is Arginine--tRNA ligase 1 of Bacillus cereus (strain ZK / E33L).